Reading from the N-terminus, the 641-residue chain is Peroxisomal targeting signal 1 receptor (641 aa).

A Glycyl cysteine thioester (Cys-Gly) (interchain with G-Cter in ubiquitin) cross-link involves residue Cys-12. Residues 12 to 34 (CSEPNALGNFVQHFTNERSYHDK) form an amphipathic helix 1 (AH1) region. Residues 74–92 (HLMMDRHLNLRDGPREHKE) are amphipathic helix 2 (AH2). Residues 261–288 (VEAAWDETARRTISDITRPITQINDPKL) form an amphipathic helix 4 (AH4) region. The WxxxF/Y motif signature appears at 331–335 (WTEDY). TPR repeat units follow at residues 359 to 392 (DSDT…NPEN), 393 to 426 (AMAW…DPTN), 427 to 460 (SKAR…TPEY), 503 to 536 (PEVQ…SPTD), 538 to 570 (QLWN…KPSY), and 571 to 604 (VRAR…HPAP).

Belongs to the peroxisomal targeting signal receptor family. In terms of assembly, interacts (via WxxxF/Y and LVxEF motifs) with PEX14; promoting translocation through the PEX13-PEX14 docking complex. Interacts with PEX7, promoting peroxisomal import of proteins containing a C-terminal PTS2-type peroxisomal targeting signal. Monoubiquitinated at Cys-12 by PEX2 during PEX5 passage through the retrotranslocation channel. Cys-12 monoubiquitination acts as a recognition signal for the PEX1-PEX6 complex and is required for PEX5 extraction and export from peroxisomes. When PEX5 recycling is compromised, polyubiquitinated by PEX10 during its passage through the retrotranslocation channel, leading to its degradation.

It is found in the cytoplasm. It localises to the cytosol. The protein resides in the peroxisome matrix. Functionally, receptor that mediates peroxisomal import of proteins containing a C-terminal PTS1-type tripeptide peroxisomal targeting signal (SKL-type). Binds to cargo proteins containing a PTS1 peroxisomal targeting signal in the cytosol, and translocates them into the peroxisome matrix by passing through the PEX13-PEX14 docking complex along with cargo proteins. PEX5 receptor is then retrotranslocated into the cytosol, leading to release of bound cargo in the peroxisome matrix, and reset for a subsequent peroxisome import cycle. In addition to promoting peroxisomal translocation of proteins containing a PTS1 peroxisomal targeting signal, mediates peroxisomal import of proteins containing a C-terminal PTS2-type peroxisomal targeting signal via its interaction with PEX7. Interaction with PEX7 only takes place when PEX7 is associated with cargo proteins containing a PTS2 peroxisomal targeting signal. PEX7 along with PTS2-containing cargo proteins are then translocated through the PEX13-PEX14 docking complex together with PEX5. This is Peroxisomal targeting signal 1 receptor (pex5) from Dictyostelium discoideum (Social amoeba).